Reading from the N-terminus, the 395-residue chain is Zinc finger protein 385D (395 aa).

The segment at 80–110 adopts a Matrin-type 1 zinc-finger fold; the sequence is ISCNICQLRFNSDSQAAAHYKGTKHAKKLKA. The span at 169–193 shows a compositional bias: polar residues; the sequence is MTTEITSKVEKSPTTATGNSSCPST. The tract at residues 169-194 is disordered; it reads MTTEITSKVEKSPTTATGNSSCPSTE. 2 Matrin-type zinc fingers span residues 204–234 and 267–297; these read LYCSLCKVAVNSASQLEAHNSGTKHKTMLEA and FHCEICDVHVNSETQLKQHISSRRHKDRAAG. The tract at residues 282-309 is disordered; sequence LKQHISSRRHKDRAAGKPPKPKYSPYNK.

Its subcellular location is the nucleus. The chain is Zinc finger protein 385D (ZNF385D) from Homo sapiens (Human).